The chain runs to 265 residues: Deoxycytidine kinase 1 (265 aa).

30–38 (GNIAAGKST) is an ATP binding site. Substrate contacts are provided by glutamate 55, tyrosine 88, and glutamine 99. The Proton acceptor role is filled by glutamate 129. Residues arginine 130 and aspartate 135 each coordinate substrate. 190–194 (RVYTR) is an ATP binding site. Glutamate 199 contacts substrate. 242–244 (EDF) is an ATP binding site.

The protein belongs to the DCK/DGK family. As to quaternary structure, homodimer.

It localises to the nucleus. The enzyme catalyses 2'-deoxycytidine + a ribonucleoside 5'-triphosphate = dCMP + a ribonucleoside 5'-diphosphate + H(+). It catalyses the reaction 2'-deoxyguanosine + ATP = dGMP + ADP + H(+). The catalysed reaction is 2'-deoxyadenosine + ATP = dAMP + ADP + H(+). Phosphorylates the deoxyribonucleosides deoxyadenosine, deoxycytidine and deoxyguanosine with highest activity against deoxycytidine followed by deadenosine and deoxyguanosine. Shows only very minor activity against deoxyuridine and deoxythymidine. The chain is Deoxycytidine kinase 1 from Xenopus laevis (African clawed frog).